A 149-amino-acid chain; its full sequence is UPF0178 protein SERP0336 (149 aa).

This sequence belongs to the UPF0178 family.

In Staphylococcus epidermidis (strain ATCC 35984 / DSM 28319 / BCRC 17069 / CCUG 31568 / BM 3577 / RP62A), this protein is UPF0178 protein SERP0336.